Here is a 181-residue protein sequence, read N- to C-terminus: Negative modulator of initiation of replication (181 aa).

Interaction with DNA stretches follow at residues Ala87–Val88, Arg116–Tyr120, and Asn150–Lys156.

It belongs to the SeqA family. In terms of assembly, homodimer. Polymerizes to form helical filaments.

Its subcellular location is the cytoplasm. Its function is as follows. Negative regulator of replication initiation, which contributes to regulation of DNA replication and ensures that replication initiation occurs exactly once per chromosome per cell cycle. Binds to pairs of hemimethylated GATC sequences in the oriC region, thus preventing assembly of replication proteins and re-initiation at newly replicated origins. Repression is relieved when the region becomes fully methylated. This is Negative modulator of initiation of replication from Shigella dysenteriae serotype 1 (strain Sd197).